Here is a 507-residue protein sequence, read N- to C-terminus: Probable D-lactate dehydrogenase, mitochondrial (507 aa).

The N-terminal 52 residues, 1–52, are a transit peptide targeting the mitochondrion; the sequence is MARLLRSATWELFPWRGYCSQKAKGELCRDFVEALKAVVGGSHVSTAAVVRE. At Lys-36 the chain carries N6-acetyllysine. An FAD-binding PCMH-type domain is found at 62 to 265; the sequence is RCEPPDAVVW…TATTLRLHPA (204 aa). The residue at position 315 (Lys-315) is an N6-acetyllysine. Lys-358 carries the N6-acetyllysine; alternate modification. The residue at position 358 (Lys-358) is an N6-succinyllysine; alternate. An N6-acetyllysine mark is found at Lys-445 and Lys-472.

Belongs to the FAD-binding oxidoreductase/transferase type 4 family. As to quaternary structure, interacts with CSRP3. It depends on FAD as a cofactor. Expressed moderately in heart and liver and at lower levels in skeletal muscle and kidney.

It localises to the mitochondrion. It catalyses the reaction (R)-lactate + 2 Fe(III)-[cytochrome c] = 2 Fe(II)-[cytochrome c] + pyruvate + 2 H(+). Its function is as follows. Involved in D-lactate, but not L-lactate catabolic process. This chain is Probable D-lactate dehydrogenase, mitochondrial, found in Homo sapiens (Human).